We begin with the raw amino-acid sequence, 142 residues long: Thioredoxin-like protein 4A (142 aa).

Cysteine 38 and cysteine 79 form a disulfide bridge. Serine 132 is subject to Phosphoserine.

Belongs to the DIM1 family. As to quaternary structure, component of the precatalytic spliceosome (spliceosome B complex). Component of the U5 snRNP complex. Component of the U4/U6-U5 tri-snRNP complex. The U4/U6-U5 tri-snRNP complex is a building block of the precatalytic spliceosome (spliceosome B complex). The U4/U6-U5 tri-snRNP complex is composed of the U4, U6 and U5 snRNAs and at least PRPF3, PRPF4, PRPF6, PRPF8, PRPF31, SNRNP200, TXNL4A, SNRNP40, SNRPB, SNRPD1, SNRPD2, SNRPD3, SNRPE, SNRPF, SNRPG, DDX23, CD2BP2, PPIH, SNU13, EFTUD2, SART1 and USP39, plus LSM2, LSM3, LSM4, LSM5, LSM6, LSM7 and LSM8. Directly interacts with CD2BP2. Interacts with HNRPF, HNRPH2, NEDD9 and PQBP1. Interacts with ERBB4. Post-translationally, the disulfide bond seen in structures determined by X-ray crystallography and NMR is not essential for protein folding and function.

The protein localises to the nucleus. In terms of biological role, plays a role in pre-mRNA splicing as component of the U5 snRNP and U4/U6-U5 tri-snRNP complexes that are involved in spliceosome assembly, and as component of the precatalytic spliceosome (spliceosome B complex). The sequence is that of Thioredoxin-like protein 4A (TXNL4A) from Homo sapiens (Human).